Consider the following 505-residue polypeptide: Beta-glucosidase 3 (505 aa).

An N-terminal signal peptide occupies residues M1–G22. Positions 43 and 143 each coordinate a beta-D-glucoside. E189 acts as the Proton donor in catalysis. A disulfide bridge connects residues C208 and C217. An N-linked (GlcNAc...) asparagine glycan is attached at N221. Positions 333 and 405 each coordinate a beta-D-glucoside. E405 acts as the Nucleophile in catalysis. N-linked (GlcNAc...) asparagine glycans are attached at residues N415 and N436. Residues W450 and Y466 each coordinate a beta-D-glucoside.

Belongs to the glycosyl hydrolase 1 family.

It carries out the reaction Hydrolysis of terminal, non-reducing beta-D-glucosyl residues with release of beta-D-glucose.. This Oryza sativa subsp. japonica (Rice) protein is Beta-glucosidase 3 (BGLU3).